The primary structure comprises 478 residues: Alcohol dehydrogenase (quinone), cytochrome c subunit (478 aa).

Positions methionine 1 to alanine 36 are cleaved as a signal peptide. Glutamine 37 carries the pyrrolidone carboxylic acid modification. Cytochrome c domains lie at alanine 42 to valine 145, proline 189 to proline 304, and glycine 327 to tryptophan 417. The heme c site is built by cysteine 56, cysteine 59, histidine 60, cysteine 204, cysteine 207, histidine 208, cysteine 340, cysteine 343, and histidine 344.

In terms of assembly, the alcohol dehydrogenase multicomponent enzyme system is composed of a dehydrogenase subunit I (AdhA), a cytochrome c subunit II (AdhB) and a subunit III (AdhS). It depends on heme c as a cofactor.

It localises to the cell membrane. The enzyme catalyses ethanol + a ubiquinone = a ubiquinol + acetaldehyde. Its activity is regulated as follows. 2,6-dichloro-4-dicyanovinylphenol (PC16) and antimycin A inhibit ubiquinol oxidation activity more selectively than the ubiquinone reductase activity. In terms of biological role, cytochrome c component of the alcohol dehydrogenase multicomponent enzyme system which is involved in the production of acetic acid and in the ethanol oxidase respiratory chain. Quinohemoprotein alcohol dehydrogenase (ADH) catalyzes the oxidation of ethanol to acetaldehyde by transferring electrons to the ubiquinone embedded in the membrane phospholipids. The electrons transfer from ethanol to membranous ubiquinone occurs from pyrroloquinoline quinone (PQQ) to one heme c in subunit I (AdhA), and finally to two heme c in subunit II (AdhB). Besides ubiquinone reduction, ADH also has a ubiquinol (QH2) oxidation reaction which mediates electron transfer from ubiquinol to the non-energy generating bypass oxidase system. The electrons transfer occurs from ubiquinol (QH2) to the additional heme c within subunit II (AdhB). Also able to use quinone analogs such as 2,3-dimethoxy-5-methyl-6-n-decyl-1,4-benzoquinone (DB) and 2,3-dimethoxy-5-methyl-6-n-pentyl-1,4-benzoquinone (PB). The polypeptide is Alcohol dehydrogenase (quinone), cytochrome c subunit (Gluconobacter oxydans (strain 621H) (Gluconobacter suboxydans)).